A 315-amino-acid chain; its full sequence is Ribosomal RNA small subunit methyltransferase H (315 aa).

Residues 35–37 (AGH), Asp55, Phe84, Asp105, and Gln112 each bind S-adenosyl-L-methionine.

This sequence belongs to the methyltransferase superfamily. RsmH family.

Its subcellular location is the cytoplasm. The catalysed reaction is cytidine(1402) in 16S rRNA + S-adenosyl-L-methionine = N(4)-methylcytidine(1402) in 16S rRNA + S-adenosyl-L-homocysteine + H(+). In terms of biological role, specifically methylates the N4 position of cytidine in position 1402 (C1402) of 16S rRNA. The polypeptide is Ribosomal RNA small subunit methyltransferase H (Streptococcus agalactiae serotype III (strain NEM316)).